Consider the following 136-residue polypeptide: Interleukin-13 (136 aa).

A signal peptide spans 1–18; that stretch reads MALWLTVVIAFTCIGGLA. Residues Asn-38, Asn-49, Asn-57, Asn-72, Asn-75, and Asn-131 are each glycosylated (N-linked (GlcNAc...) asparagine). Cystine bridges form between Cys-48–Cys-76 and Cys-64–Cys-90.

This sequence belongs to the IL-4/IL-13 family. In terms of assembly, interacts with IL13RA2.

It localises to the secreted. In terms of biological role, cytokine that plays important roles in allergic inflammation and immune response to parasite infection. Synergizes with IL2 in regulating interferon-gamma synthesis. Stimulates B-cell proliferation, and activation of eosinophils, basophils, and mast cells. Plays an important role in controlling IL33 activity by modulating the production of transmembrane and soluble forms of interleukin-1 receptor-like 1/IL1RL1. Displays the capacity to antagonize Th1-driven proinflammatory immune response and downregulates synthesis of many proinflammatory cytokines including IL1, IL6, IL10, IL12 and TNF-alpha through a mechanism that partially involves suppression of NF-kappa-B. Also functions on nonhematopoietic cells, including endothelial cells where it induces vascular cell adhesion protein 1/VCAM1, which is important in the recruitment of eosinophils. Exerts its biological effects through its receptors which comprises the IL4R chain and the IL13RA1 chain, to activate JAK1 and TYK2, leading to the activation of STAT6. Aside from IL13RA1, another receptor IL13RA2 acts as a high affinity decoy for IL13 and mediates internalization and depletion of extracellular IL13. The sequence is that of Interleukin-13 (IL13) from Camelus bactrianus (Bactrian camel).